Here is a 37-residue protein sequence, read N- to C-terminus: Large ribosomal subunit protein bL36c (37 aa).

This sequence belongs to the bacterial ribosomal protein bL36 family.

Its subcellular location is the plastid. The protein resides in the chloroplast. The sequence is that of Large ribosomal subunit protein bL36c from Coffea arabica (Arabian coffee).